Reading from the N-terminus, the 146-residue chain is Small ribosomal subunit protein uS5 (146 aa).

The 64-residue stretch at Phe-8–Val-71 folds into the S5 DRBM domain.

Belongs to the universal ribosomal protein uS5 family. As to quaternary structure, part of the 30S ribosomal subunit. Contacts proteins S4 and S8.

Its function is as follows. With S4 and S12 plays an important role in translational accuracy. Functionally, located at the back of the 30S subunit body where it stabilizes the conformation of the head with respect to the body. This is Small ribosomal subunit protein uS5 from Campylobacter hominis (strain ATCC BAA-381 / DSM 21671 / CCUG 45161 / LMG 19568 / NCTC 13146 / CH001A).